We begin with the raw amino-acid sequence, 380 residues long: Cytochrome b (380 aa).

A run of 4 helical transmembrane segments spans residues 33-53 (FGSLLGLCLITQILTGLFLAM), 77-98 (WLIRNLHANGASFFFICMYLHV), 113-133 (WNIGVILLLLVMMTAFVGYVL), and 178-198 (FFAFHFILPFIVAAAVILHLL). Heme b-binding residues include His83 and His97. Positions 182 and 196 each coordinate heme b. His201 serves as a coordination point for a ubiquinone. The next 4 membrane-spanning stretches (helical) occupy residues 226-246 (YKDILGFIVMLLALITLALFS), 288-308 (LGGVLALLFSILVLMIVPILH), 320-340 (FSQFLFWVLVADMLILTWIGG), and 347-367 (FIIIGQIASILYFTLFLLLIP).

It belongs to the cytochrome b family. In terms of assembly, the cytochrome bc1 complex contains 3 respiratory subunits (MT-CYB, CYC1 and UQCRFS1), 2 core proteins (UQCRC1 and UQCRC2) and probably 6 low-molecular weight proteins. The cofactor is heme b.

It is found in the mitochondrion inner membrane. Component of the ubiquinol-cytochrome c reductase complex (complex III or cytochrome b-c1 complex) that is part of the mitochondrial respiratory chain. The b-c1 complex mediates electron transfer from ubiquinol to cytochrome c. Contributes to the generation of a proton gradient across the mitochondrial membrane that is then used for ATP synthesis. The protein is Cytochrome b (mt-cyb) of Arapaima gigas (Arapaima).